The chain runs to 159 residues: Ribonuclease H (159 aa).

Residues 10-153 (TQTQVVIYTD…ADALANQGVE (144 aa)) form the RNase H type-1 domain. Mg(2+)-binding residues include D19, E57, D79, and D145.

This sequence belongs to the RNase H family. Monomer. The cofactor is Mg(2+).

Its subcellular location is the cytoplasm. It catalyses the reaction Endonucleolytic cleavage to 5'-phosphomonoester.. In terms of biological role, endonuclease that specifically degrades the RNA of RNA-DNA hybrids. This Polaromonas sp. (strain JS666 / ATCC BAA-500) protein is Ribonuclease H.